Reading from the N-terminus, the 953-residue chain is uncharacterized protein (953 aa).

11 helical membrane-spanning segments follow: residues 23 to 43 (VVTS…AFLI), 103 to 123 (YLFI…PILL), 148 to 168 (GRYF…LYII), 392 to 412 (VSAI…VGMI), 435 to 455 (LLGL…MSFL), 481 to 501 (AYFA…SAAT), 540 to 560 (ISSG…LGAF), 575 to 595 (LSSM…VITF), 599 to 619 (IISP…YIAY), 642 to 662 (LFQT…LFAV), and 666 to 686 (WGPI…HLHL). The interval 910 to 953 (VPPPYNDVKDEANGEANGEFDTASKENNPFADPKYKEEESRSAV) is disordered. Basic and acidic residues predominate over residues 942–953 (PKYKEEESRSAV). Position 949 is a phosphoserine (serine 949).

Belongs to the CSC1 (TC 1.A.17) family.

Its subcellular location is the membrane. Acts as an osmosensitive calcium-permeable cation channel. This is an uncharacterized protein from Saccharomyces cerevisiae (strain ATCC 204508 / S288c) (Baker's yeast).